Reading from the N-terminus, the 76-residue chain is uncharacterized protein (76 aa).

Residues Ser53–Val70 traverse the membrane as a helical segment.

It is found in the membrane. This is an uncharacterized protein from Haemophilus influenzae (strain ATCC 51907 / DSM 11121 / KW20 / Rd).